A 916-amino-acid chain; its full sequence is Alanine--tRNA ligase (916 aa).

Zn(2+)-binding residues include histidine 611, histidine 615, cysteine 714, and histidine 718.

Belongs to the class-II aminoacyl-tRNA synthetase family. Zn(2+) serves as cofactor.

The protein localises to the cytoplasm. The catalysed reaction is tRNA(Ala) + L-alanine + ATP = L-alanyl-tRNA(Ala) + AMP + diphosphate. In terms of biological role, catalyzes the attachment of alanine to tRNA(Ala) in a two-step reaction: alanine is first activated by ATP to form Ala-AMP and then transferred to the acceptor end of tRNA(Ala). Also edits incorrectly charged Ser-tRNA(Ala) and Gly-tRNA(Ala) via its editing domain. This is Alanine--tRNA ligase from Methanospirillum hungatei JF-1 (strain ATCC 27890 / DSM 864 / NBRC 100397 / JF-1).